Reading from the N-terminus, the 565-residue chain is Urease subunit beta (565 aa).

The 436-residue stretch at 130–565 (GGIDTHIHFI…LALARKYFMI (436 aa)) folds into the Urease domain. Residues His-135, His-137, and Lys-218 each contribute to the Ni(2+) site. Lys-218 is subject to N6-carboxylysine. His-220 is a binding site for substrate. Ni(2+) is bound by residues His-247 and His-273. His-321 serves as the catalytic Proton donor. Asp-361 is a Ni(2+) binding site.

Belongs to the metallo-dependent hydrolases superfamily. Urease alpha subunit family. Heterohexamer of 3 UreA (alpha) and 3 UreB (beta) subunits. Ni cation is required as a cofactor. Post-translationally, carboxylation allows a single lysine to coordinate two nickel ions.

The protein localises to the cytoplasm. The catalysed reaction is urea + 2 H2O + H(+) = hydrogencarbonate + 2 NH4(+). The protein operates within nitrogen metabolism; urea degradation; CO(2) and NH(3) from urea (urease route): step 1/1. The chain is Urease subunit beta from Campylobacter lari.